Reading from the N-terminus, the 352-residue chain is S-adenosylmethionine:tRNA ribosyltransferase-isomerase (352 aa).

Belongs to the QueA family. As to quaternary structure, monomer.

It is found in the cytoplasm. It catalyses the reaction 7-aminomethyl-7-carbaguanosine(34) in tRNA + S-adenosyl-L-methionine = epoxyqueuosine(34) in tRNA + adenine + L-methionine + 2 H(+). Its pathway is tRNA modification; tRNA-queuosine biosynthesis. Its function is as follows. Transfers and isomerizes the ribose moiety from AdoMet to the 7-aminomethyl group of 7-deazaguanine (preQ1-tRNA) to give epoxyqueuosine (oQ-tRNA). The polypeptide is S-adenosylmethionine:tRNA ribosyltransferase-isomerase (Syntrophomonas wolfei subsp. wolfei (strain DSM 2245B / Goettingen)).